The sequence spans 554 residues: 3-(3-hydroxy-phenyl)propionate/3-hydroxycinnamic acid hydroxylase (554 aa).

FAD is bound by residues glutamine 17–lysine 46 and phenylalanine 285–aspartate 295.

This sequence belongs to the PheA/TfdB FAD monooxygenase family. It depends on FAD as a cofactor.

The catalysed reaction is 3-(3-hydroxyphenyl)propanoate + NADH + O2 + H(+) = 3-(2,3-dihydroxyphenyl)propanoate + NAD(+) + H2O. It catalyses the reaction (2E)-3-(3-hydroxyphenyl)prop-2-enoate + NADH + O2 + H(+) = (2E)-3-(2,3-dihydroxyphenyl)prop-2-enoate + NAD(+) + H2O. Its pathway is aromatic compound metabolism; 3-phenylpropanoate degradation. Its function is as follows. Catalyzes the insertion of one atom of molecular oxygen into position 2 of the phenyl ring of 3-(3-hydroxyphenyl)propionate (3-HPP) and hydroxycinnamic acid (3HCI). The polypeptide is 3-(3-hydroxy-phenyl)propionate/3-hydroxycinnamic acid hydroxylase (Escherichia coli O8 (strain IAI1)).